A 208-amino-acid polypeptide reads, in one-letter code: Meiotically up-regulated gene 9 protein (208 aa).

Residues 77-114 form a disordered region; it reads VPASNEKAARVSNLKTVPSLKRENKEVNANSKPPVKQQ.

Functionally, has a role in meiosis. The polypeptide is Meiotically up-regulated gene 9 protein (mug9) (Schizosaccharomyces pombe (strain 972 / ATCC 24843) (Fission yeast)).